The chain runs to 228 residues: Vesicle transport protein SEC20 (228 aa).

Residues 1-199 (MAAPQDVHVR…LITKYNRREL (199 aa)) are Cytoplasmic-facing. A coiled-coil region spans residues 37–90 (LSALTELNTKVKEKFQQLRHRIQDLEQLAKEQDKESEKQLLLQEVENHKKQMLS). Residues 200–220 (TDKLLIFLALALFLATVLYIV) traverse the membrane as a helical; Anchor for type IV membrane protein segment. Topologically, residues 221–228 (KKRLFPFL) are lumenal.

This sequence belongs to the SEC20 family. In terms of assembly, component of a SNARE complex consisting of STX18, USE1L, BNIP1/SEC20L and SEC22B. Interacts directly with STX18, RINT1/TIP20L and NAPA. Interacts with ZW10 through RINT1. Interacts with BCL2. Interacts with RNF186. Interacts with RNF185. Interacts with SQSTM1; increased by 'Lys-63'-linked polyubiquitination of BNIP1. As to quaternary structure, (Microbial infection) Interacts with adenovirus E1B 19K protein; plays a role in the suppression of cell apoptosis by the viral protein. Polyubiquitinated. 'Lys-63'-linked polyubiquitination by RNF185 increases the interaction with the autophagy receptor SQSTM1. Undergoes 'Lys-29'- and 'Lys-63'-linked polyubiquitination by RNF186 that may regulate BNIP1 localization to the mitochondrion. Isoform 1 is highly expressed in heart, brain, liver skeletal muscle and pancreas. Isoform 3 is moderately expressed in placenta, lung and kidney. Isoform 4 is highly expressed in testis and small intestine.

Its subcellular location is the endoplasmic reticulum membrane. It localises to the mitochondrion membrane. Its function is as follows. As part of a SNARE complex may be involved in endoplasmic reticulum membranes fusion and be required for the maintenance of endoplasmic reticulum organization. Also plays a role in apoptosis. It is for instance required for endoplasmic reticulum stress-induced apoptosis. As a substrate of RNF185 interacting with SQSTM1, might also be involved in mitochondrial autophagy. In Homo sapiens (Human), this protein is Vesicle transport protein SEC20 (BNIP1).